Reading from the N-terminus, the 93-residue chain is Small ribosomal subunit protein uS19 (93 aa).

Belongs to the universal ribosomal protein uS19 family.

In terms of biological role, protein S19 forms a complex with S13 that binds strongly to the 16S ribosomal RNA. In Microcystis aeruginosa (strain NIES-843 / IAM M-2473), this protein is Small ribosomal subunit protein uS19.